Consider the following 135-residue polypeptide: MVSRVESVIVFALYKFLQRYFHSFHCFFLLCFTVMLCVVQQCSSAMTSFRCPTFSLSKYTCVLPASIPEMILFTFSSHTFQTPTKKGNKTKKKRKKEKKKETIVEKNKVLKSFALYKKINNYRSTRCVLVCQCKY.

A helical membrane pass occupies residues 20–39 (YFHSFHCFFLLCFTVMLCVV). The disordered stretch occupies residues 81–101 (QTPTKKGNKTKKKRKKEKKKE). Residues 86 to 98 (KGNKTKKKRKKEK) show a composition bias toward basic residues.

The protein resides in the mitochondrion membrane. Its function is as follows. Has a role in meiosis. The chain is Meiotically up-regulated gene 116 protein (mug116) from Schizosaccharomyces pombe (strain 972 / ATCC 24843) (Fission yeast).